Consider the following 43-residue polypeptide: Protein PsbN (43 aa).

A helical transmembrane segment spans residues 5–27; the sequence is TLVTISISCLLVSFTGYALYTAF.

The protein belongs to the PsbN family.

The protein resides in the plastid. The protein localises to the chloroplast thylakoid membrane. In terms of biological role, may play a role in photosystem I and II biogenesis. The chain is Protein PsbN from Pinus koraiensis (Korean pine).